The sequence spans 370 residues: 3-isopropylmalate dehydrogenase (370 aa).

77–90 (GPKWDGVPYDARPE) provides a ligand contact to NAD(+). Positions 97, 107, 135, and 226 each coordinate substrate. Mg(2+) is bound by residues Asp226, Asp250, and Asp254. 290–302 (GSAPDIAGKGMAN) serves as a coordination point for NAD(+).

It belongs to the isocitrate and isopropylmalate dehydrogenases family. LeuB type 1 subfamily. Homodimer. Mg(2+) is required as a cofactor. The cofactor is Mn(2+).

It is found in the cytoplasm. It catalyses the reaction (2R,3S)-3-isopropylmalate + NAD(+) = 4-methyl-2-oxopentanoate + CO2 + NADH. It functions in the pathway amino-acid biosynthesis; L-leucine biosynthesis; L-leucine from 3-methyl-2-oxobutanoate: step 3/4. In terms of biological role, catalyzes the oxidation of 3-carboxy-2-hydroxy-4-methylpentanoate (3-isopropylmalate) to 3-carboxy-4-methyl-2-oxopentanoate. The product decarboxylates to 4-methyl-2 oxopentanoate. This is 3-isopropylmalate dehydrogenase from Rhodopseudomonas palustris (strain ATCC BAA-98 / CGA009).